We begin with the raw amino-acid sequence, 516 residues long: RxLR effector protein PITG_15127 (516 aa).

The signal sequence occupies residues methionine 1 to alanine 22. Positions arginine 48–arginine 63 match the RxLR-dEER motif.

Belongs to the RxLR effector family.

The protein resides in the secreted. It is found in the host cell membrane. The protein localises to the host nucleus. It localises to the host cytoplasm. Its function is as follows. Effector that enhances P.infestans colonization of Nicotiana benthamiana leaves. In Phytophthora infestans (strain T30-4) (Potato late blight agent), this protein is RxLR effector protein PITG_15127.